The following is a 504-amino-acid chain: Sperm motility kinase 2A (504 aa).

Residues 28 to 276 (YEMLGTIGHG…VAEVMMHPWV (249 aa)) form the Protein kinase domain. ATP-binding positions include 34-42 (IGHGGSTKV) and K57. Catalysis depends on D147, which acts as the Proton acceptor. The UBA domain maps to 294–334 (KPDPAIVKAMGHIGFQAQDIEDSLRQRKFNETMASYCLLKK). Polar residues-rich tracts occupy residues 376 to 393 (PTSL…CGRS) and 443 to 454 (SDESTEGHTSAS). Disordered stretches follow at residues 376–403 (PTSL…RSFS) and 443–469 (SDES…PRGI).

This sequence belongs to the protein kinase superfamily. CAMK Ser/Thr protein kinase family. Smok subfamily. In terms of tissue distribution, testis-specific. Expressed in the testis from 22 days postpartum (22 dpp).

It catalyses the reaction L-seryl-[protein] + ATP = O-phospho-L-seryl-[protein] + ADP + H(+). The enzyme catalyses L-threonyl-[protein] + ATP = O-phospho-L-threonyl-[protein] + ADP + H(+). Its function is as follows. May play a role in sperm motility, especially in the regulation of flagellar function. The polypeptide is Sperm motility kinase 2A (Smok2a) (Mus musculus (Mouse)).